The chain runs to 292 residues: Acetyl-coenzyme A carboxylase carboxyl transferase subunit beta (292 aa).

A CoA carboxyltransferase N-terminal domain is found at 29 to 292 (LWSKCPECGQ…HGCESRVASS (264 aa)). 4 residues coordinate Zn(2+): Cys-33, Cys-36, Cys-52, and Cys-55. Residues 33 to 55 (CPECGQVVYRKDLLSNASVCGNC) form a C4-type zinc finger.

This sequence belongs to the AccD/PCCB family. In terms of assembly, acetyl-CoA carboxylase is a heterohexamer composed of biotin carboxyl carrier protein (AccB), biotin carboxylase (AccC) and two subunits each of ACCase subunit alpha (AccA) and ACCase subunit beta (AccD). Zn(2+) serves as cofactor.

Its subcellular location is the cytoplasm. The enzyme catalyses N(6)-carboxybiotinyl-L-lysyl-[protein] + acetyl-CoA = N(6)-biotinyl-L-lysyl-[protein] + malonyl-CoA. The protein operates within lipid metabolism; malonyl-CoA biosynthesis; malonyl-CoA from acetyl-CoA: step 1/1. In terms of biological role, component of the acetyl coenzyme A carboxylase (ACC) complex. Biotin carboxylase (BC) catalyzes the carboxylation of biotin on its carrier protein (BCCP) and then the CO(2) group is transferred by the transcarboxylase to acetyl-CoA to form malonyl-CoA. This is Acetyl-coenzyme A carboxylase carboxyl transferase subunit beta from Synechococcus sp. (strain CC9311).